Reading from the N-terminus, the 550-residue chain is Chaperonin GroEL (550 aa).

Residues 29–32 (TAGP), Lys50, 86–90 (DGTTT), Gly418, and Asp499 each bind ATP.

The protein belongs to the chaperonin (HSP60) family. As to quaternary structure, forms a cylinder of 14 subunits composed of two heptameric rings stacked back-to-back. Interacts with the co-chaperonin GroES.

The protein localises to the cytoplasm. It catalyses the reaction ATP + H2O + a folded polypeptide = ADP + phosphate + an unfolded polypeptide.. In terms of biological role, together with its co-chaperonin GroES, plays an essential role in assisting protein folding. The GroEL-GroES system forms a nano-cage that allows encapsulation of the non-native substrate proteins and provides a physical environment optimized to promote and accelerate protein folding. This Wolbachia sp. subsp. Brugia malayi (strain TRS) protein is Chaperonin GroEL.